The chain runs to 426 residues: Serine--tRNA ligase (426 aa).

L-serine is bound at residue 233 to 235 (TAE). An ATP-binding site is contributed by 264–266 (RSE). E287 serves as a coordination point for L-serine. 351–354 (EISS) provides a ligand contact to ATP. S387 is an L-serine binding site.

Belongs to the class-II aminoacyl-tRNA synthetase family. Type-1 seryl-tRNA synthetase subfamily. As to quaternary structure, homodimer. The tRNA molecule binds across the dimer.

It localises to the cytoplasm. It catalyses the reaction tRNA(Ser) + L-serine + ATP = L-seryl-tRNA(Ser) + AMP + diphosphate + H(+). The enzyme catalyses tRNA(Sec) + L-serine + ATP = L-seryl-tRNA(Sec) + AMP + diphosphate + H(+). It functions in the pathway aminoacyl-tRNA biosynthesis; selenocysteinyl-tRNA(Sec) biosynthesis; L-seryl-tRNA(Sec) from L-serine and tRNA(Sec): step 1/1. Functionally, catalyzes the attachment of serine to tRNA(Ser). Is also able to aminoacylate tRNA(Sec) with serine, to form the misacylated tRNA L-seryl-tRNA(Sec), which will be further converted into selenocysteinyl-tRNA(Sec). This chain is Serine--tRNA ligase, found in Clostridium botulinum (strain 657 / Type Ba4).